We begin with the raw amino-acid sequence, 280 residues long: Large ribosomal subunit protein uL2 (280 aa).

Disordered regions lie at residues 29-58 and 225-280; these read PEKSLLRPLSKTGGRNSHGHITTRHRGGGH and VMNP…NKKR. A compositionally biased stretch (basic residues) spans 45 to 58; the sequence is SHGHITTRHRGGGH. Basic and acidic residues predominate over residues 253–269; it reads KEGRTRKPKRYSDDMIV. Basic residues predominate over residues 270-280; the sequence is RRRRANKNKKR.

The protein belongs to the universal ribosomal protein uL2 family. In terms of assembly, part of the 50S ribosomal subunit. Forms a bridge to the 30S subunit in the 70S ribosome.

Its function is as follows. One of the primary rRNA binding proteins. Required for association of the 30S and 50S subunits to form the 70S ribosome, for tRNA binding and peptide bond formation. It has been suggested to have peptidyltransferase activity; this is somewhat controversial. Makes several contacts with the 16S rRNA in the 70S ribosome. This is Large ribosomal subunit protein uL2 from Corynebacterium glutamicum (strain R).